The following is a 626-amino-acid chain: Chaperone protein HtpG (626 aa).

Positions 1–341 (METKQFKAES…SEDLSLNISR (341 aa)) are a; substrate-binding. Residues 342 to 552 (EILQHDRQLK…EGELSIEMEK (211 aa)) are b. A c region spans residues 553–626 (VLNAMPNNQN…FTNNICKIMK (74 aa)).

The protein belongs to the heat shock protein 90 family. As to quaternary structure, homodimer.

The protein resides in the cytoplasm. Its function is as follows. Molecular chaperone. Has ATPase activity. The protein is Chaperone protein HtpG of Clostridium botulinum (strain 657 / Type Ba4).